We begin with the raw amino-acid sequence, 588 residues long: Proteasome-associated ATPase (588 aa).

The span at 1 to 10 (MAAHDDDMNR) shows a compositional bias: basic and acidic residues. The disordered stretch occupies residues 1 to 23 (MAAHDDDMNRGIRPGRGSEDPAG). Positions 47–94 (RILEERIVELQTNLAGVSAQNERLAGTLREARDQIVALKEEVDRLAQP) form a coiled coil. Position 276-281 (276-281 (GCGKTL)) interacts with ATP. The tract at residues 587 to 588 (YL) is docks into pockets in the proteasome alpha-ring.

The protein belongs to the AAA ATPase family. In terms of assembly, homohexamer. Assembles into a hexameric ring structure that caps the 20S proteasome core. Strongly interacts with the prokaryotic ubiquitin-like protein Pup through a hydrophobic interface; the interacting region of ARC lies in its N-terminal coiled-coil domain. There is one Pup binding site per ARC hexamer ring. Upon ATP-binding, the C-terminus of ARC interacts with the alpha-rings of the proteasome core, possibly by binding to the intersubunit pockets.

It participates in protein degradation; proteasomal Pup-dependent pathway. ATPase which is responsible for recognizing, binding, unfolding and translocation of pupylated proteins into the bacterial 20S proteasome core particle. May be essential for opening the gate of the 20S proteasome via an interaction with its C-terminus, thereby allowing substrate entry and access to the site of proteolysis. Thus, the C-termini of the proteasomal ATPase may function like a 'key in a lock' to induce gate opening and therefore regulate proteolysis. The polypeptide is Proteasome-associated ATPase (Streptomyces coelicolor (strain ATCC BAA-471 / A3(2) / M145)).